The primary structure comprises 118 residues: MSNIIKQLEQEQMKQDVPAFRPGDSVEVKVWVVEGSKKRLQAFERVVIAIRNRGLHSAFTVRKISNGEGVERVFQTHSPVIDSITVKRRGAVRKAKLYYLRERTGKAARIKERLNRVG.

It belongs to the bacterial ribosomal protein bL19 family.

In terms of biological role, this protein is located at the 30S-50S ribosomal subunit interface and may play a role in the structure and function of the aminoacyl-tRNA binding site. The sequence is that of Large ribosomal subunit protein bL19 (rplS) from Serratia marcescens.